A 455-amino-acid polypeptide reads, in one-letter code: Phosphoglucosamine mutase (455 aa).

Serine 104 (phosphoserine intermediate) is an active-site residue. 4 residues coordinate Mg(2+): serine 104, aspartate 243, aspartate 245, and aspartate 247. Serine 104 carries the post-translational modification Phosphoserine.

Belongs to the phosphohexose mutase family. Requires Mg(2+) as cofactor. Post-translationally, activated by phosphorylation.

The enzyme catalyses alpha-D-glucosamine 1-phosphate = D-glucosamine 6-phosphate. Functionally, catalyzes the conversion of glucosamine-6-phosphate to glucosamine-1-phosphate. The sequence is that of Phosphoglucosamine mutase from Synechococcus sp. (strain CC9311).